The sequence spans 236 residues: Phosphoribosylaminoimidazole-succinocarboxamide synthase (236 aa).

This sequence belongs to the SAICAR synthetase family.

It carries out the reaction 5-amino-1-(5-phospho-D-ribosyl)imidazole-4-carboxylate + L-aspartate + ATP = (2S)-2-[5-amino-1-(5-phospho-beta-D-ribosyl)imidazole-4-carboxamido]succinate + ADP + phosphate + 2 H(+). It participates in purine metabolism; IMP biosynthesis via de novo pathway; 5-amino-1-(5-phospho-D-ribosyl)imidazole-4-carboxamide from 5-amino-1-(5-phospho-D-ribosyl)imidazole-4-carboxylate: step 1/2. The protein is Phosphoribosylaminoimidazole-succinocarboxamide synthase of Pseudomonas putida (strain ATCC 700007 / DSM 6899 / JCM 31910 / BCRC 17059 / LMG 24140 / F1).